A 576-amino-acid polypeptide reads, in one-letter code: Deformed epidermal autoregulatory factor 1 (576 aa).

3 disordered regions span residues 52–76, 189–215, and 309–362; these read VTSS…GGGN, AGGA…NPST, and ESAS…SGSG. Gly residues-rich tracts occupy residues 61–76 and 191–207; these read GSGG…GGGN and GASG…GGSS. The SAND domain maps to 210-291; it reads SENPSTQHNE…QSLIDEGTLT (82 aa). The Nuclear localization signal motif lies at 324 to 340; the sequence is RKRNQTDLDMESGPKRK. The segment covering 345-362 has biased composition (low complexity); it reads HSNNNNSNTNNNNTSGSG. Positions 521, 524, 532, 535, 541, 545, 553, and 557 each coordinate Zn(2+). An MYND-type zinc finger spans residues 521 to 557; that stretch reads CANCNREALAECSLCRKTPYCSEFCQRKDWNAHQVEC.

Its subcellular location is the nucleus. Functionally, transcription factor that binds the homeotic Deformed (Dfd) response element. High affinity binding sites contain at least 1 TTCG motif surrounded by additional TCG sequences. May be involved in the selective action of Dfd on these sites without binding directly to the Dfd protein. Requirement of DEAF1 activity may be a common feature of enhancers targeted by Dfd. In Drosophila melanogaster (Fruit fly), this protein is Deformed epidermal autoregulatory factor 1 (Deaf1).